The following is a 479-amino-acid chain: tRNA-2-methylthio-N(6)-dimethylallyladenosine synthase (479 aa).

The MTTase N-terminal domain maps to 6–122 (KTVYIKTVGC…IPDMLTKVTS (117 aa)). Residues C15, C51, C85, C172, C176, and C179 each coordinate [4Fe-4S] cluster. In terms of domain architecture, Radical SAM core spans 158-390 (RPTPFQAYLR…LAVQDRISKE (233 aa)). The region spanning 393–464 (QKLIGDTVEV…SHTLIGRVKT (72 aa)) is the TRAM domain.

Belongs to the methylthiotransferase family. MiaB subfamily. Monomer. Requires [4Fe-4S] cluster as cofactor.

Its subcellular location is the cytoplasm. It carries out the reaction N(6)-dimethylallyladenosine(37) in tRNA + (sulfur carrier)-SH + AH2 + 2 S-adenosyl-L-methionine = 2-methylsulfanyl-N(6)-dimethylallyladenosine(37) in tRNA + (sulfur carrier)-H + 5'-deoxyadenosine + L-methionine + A + S-adenosyl-L-homocysteine + 2 H(+). In terms of biological role, catalyzes the methylthiolation of N6-(dimethylallyl)adenosine (i(6)A), leading to the formation of 2-methylthio-N6-(dimethylallyl)adenosine (ms(2)i(6)A) at position 37 in tRNAs that read codons beginning with uridine. This chain is tRNA-2-methylthio-N(6)-dimethylallyladenosine synthase, found in Rhodopirellula baltica (strain DSM 10527 / NCIMB 13988 / SH1).